Consider the following 625-residue polypeptide: Ankyrin repeat domain-containing protein oryK (625 aa).

ANK repeat units lie at residues 1-27, 31-60, 62-89, 90-119, 162-195, 202-232, 500-530, 534-562, and 568-598; these read MDIY…DVDG, DGKT…GRGP, NPSL…NAER, EHRS…EYQD, FFDY…DVNC, QFET…DLTI, DTRC…NVNF, SDRT…DIDL, and EGRT…DFSI.

The protein operates within secondary metabolite biosynthesis. In terms of biological role, ankyrin repeat domain-containing protein; part of the gene cluster that mediates the biosynthesis of oryzines, natural products with an unusual maleidride backbone. The two subunits of the fungal fatty acid synthase oryfasA and oryfasB probably form octenoic acid. This fatty acid is most likely activated by the acyl-CoA ligase oryP to give octenyl-CoA before the citrate synthase-like protein oryE catalyzes condensation with oxaloacetate to form tricarboxylic acid. The next steps of the pathways are conjectural, but a favorite possible route has been proposed, beginning with decarboxylation and concomitant dehydration by the decarboxylase oryM, followed by tautomerization, which may lead to the production of a diene intermediate. Reduction of this diene intermediate could give the known metabolite piliformic acid. On the pathway to oryzine B and oryzine A, however, hydroxylation of the diene by the alpha-ketoglutarate-dependent dioxygenase oryG and lactonisation by the lactonohydrolases oryH or oryL could give oryzine B directly. Finally, enoyl reduction by the dehydrogenase oryD would then convert oryzine B into oryzine A. This Aspergillus oryzae (strain ATCC 42149 / RIB 40) (Yellow koji mold) protein is Ankyrin repeat domain-containing protein oryK.